The primary structure comprises 201 residues: Large ribosomal subunit protein bL25 (201 aa).

It belongs to the bacterial ribosomal protein bL25 family. CTC subfamily. As to quaternary structure, part of the 50S ribosomal subunit; part of the 5S rRNA/L5/L18/L25 subcomplex. Contacts the 5S rRNA. Binds to the 5S rRNA independently of L5 and L18.

Functionally, this is one of the proteins that binds to the 5S RNA in the ribosome where it forms part of the central protuberance. This chain is Large ribosomal subunit protein bL25, found in Aromatoleum aromaticum (strain DSM 19018 / LMG 30748 / EbN1) (Azoarcus sp. (strain EbN1)).